The following is an 890-amino-acid chain: DNA mismatch repair protein MutS (890 aa).

Residues 1–13 (MDKGINLQNDKEP) are compositionally biased toward basic and acidic residues. Residues 1–23 (MDKGINLQNDKEPSPMAEGNPAD) form a disordered region. ATP is bound at residue 649-656 (GPNMGGKS).

This sequence belongs to the DNA mismatch repair MutS family.

Its function is as follows. This protein is involved in the repair of mismatches in DNA. It is possible that it carries out the mismatch recognition step. This protein has a weak ATPase activity. The protein is DNA mismatch repair protein MutS of Paracidovorax citrulli (strain AAC00-1) (Acidovorax citrulli).